Reading from the N-terminus, the 327-residue chain is Undecaprenyl-phosphate 4-deoxy-4-formamido-L-arabinose transferase (327 aa).

The next 2 membrane-spanning stretches (helical) occupy residues 235–255 and 270–290; these read LLSLVGSAIALLGFTFSVLLV and VFTLFAVLFMFIGAQFVGMGL.

Belongs to the glycosyltransferase 2 family.

The protein resides in the cell inner membrane. It carries out the reaction UDP-4-deoxy-4-formamido-beta-L-arabinose + di-trans,octa-cis-undecaprenyl phosphate = 4-deoxy-4-formamido-alpha-L-arabinopyranosyl di-trans,octa-cis-undecaprenyl phosphate + UDP. The protein operates within glycolipid biosynthesis; 4-amino-4-deoxy-alpha-L-arabinose undecaprenyl phosphate biosynthesis; 4-amino-4-deoxy-alpha-L-arabinose undecaprenyl phosphate from UDP-4-deoxy-4-formamido-beta-L-arabinose and undecaprenyl phosphate: step 1/2. It participates in bacterial outer membrane biogenesis; lipopolysaccharide biosynthesis. Functionally, catalyzes the transfer of 4-deoxy-4-formamido-L-arabinose from UDP to undecaprenyl phosphate. The modified arabinose is attached to lipid A and is required for resistance to polymyxin and cationic antimicrobial peptides. The sequence is that of Undecaprenyl-phosphate 4-deoxy-4-formamido-L-arabinose transferase from Yersinia pestis bv. Antiqua (strain Antiqua).